The primary structure comprises 90 residues: Small ribosomal subunit protein bS16 (90 aa).

Belongs to the bacterial ribosomal protein bS16 family. As to quaternary structure, part of the 30S ribosomal subunit.

This Bacillus subtilis (strain 168) protein is Small ribosomal subunit protein bS16.